Consider the following 251-residue polypeptide: uncharacterized protein (251 aa).

An N-terminal signal peptide occupies residues 1-18 (MKILIILSIILCSLFGRA).

This sequence belongs to the MlaA family.

This is an uncharacterized protein from Rickettsia prowazekii (strain Madrid E).